Consider the following 209-residue polypeptide: Ion-translocating oxidoreductase complex subunit G (209 aa).

A helical transmembrane segment spans residues 9-29 (ATTLALFAASTTAVTAVVNML). Threonine 175 is subject to FMN phosphoryl threonine.

Belongs to the RnfG family. As to quaternary structure, the complex is composed of six subunits: RnfA, RnfB, RnfC, RnfD, RnfE and RnfG. FMN is required as a cofactor.

The protein localises to the cell inner membrane. Part of a membrane-bound complex that couples electron transfer with translocation of ions across the membrane. This Pectobacterium atrosepticum (strain SCRI 1043 / ATCC BAA-672) (Erwinia carotovora subsp. atroseptica) protein is Ion-translocating oxidoreductase complex subunit G.